Consider the following 300-residue polypeptide: Tyrosine phosphatase-like protein J1 (300 aa).

The Tyrosine-protein phosphatase domain occupies 27–294; the sequence is LKREHEHIMQ…IFCYFTVLQF (268 aa).

Belongs to the protein-tyrosine phosphatase family.

The sequence is that of Tyrosine phosphatase-like protein J1 (J1) from Microplitis demolitor (Parasitoid wasp).